Reading from the N-terminus, the 198-residue chain is ATP synthase protein MI25 (198 aa).

Residues 29 to 49 (ISIYNEEMIVALCFIGFIIFS) form a helical membrane-spanning segment.

This sequence belongs to the ATPase protein MI25 family. As to quaternary structure, F-type ATPases have 2 components, CF(1) - the catalytic core - and CF(0) - the membrane proton channel. CF(1) has five subunits: alpha(3), beta(3), gamma(1), delta(1), epsilon(1). CF(0) has three main subunits: a, b and c.

Its subcellular location is the mitochondrion membrane. Its function is as follows. This is one of the chains of the nonenzymatic component (CF(0) subunit) of the mitochondrial ATPase complex. The sequence is that of ATP synthase protein MI25 from Nicotiana tabacum (Common tobacco).